The chain runs to 185 residues: Ribosome-recycling factor (185 aa).

This sequence belongs to the RRF family.

It is found in the cytoplasm. Functionally, responsible for the release of ribosomes from messenger RNA at the termination of protein biosynthesis. May increase the efficiency of translation by recycling ribosomes from one round of translation to another. The sequence is that of Ribosome-recycling factor from Hahella chejuensis (strain KCTC 2396).